The chain runs to 331 residues: Ketol-acid reductoisomerase (NADP(+)) (331 aa).

The region spanning leucine 2–threonine 181 is the KARI N-terminal Rossmann domain. Residues tyrosine 25–glutamine 28, arginine 48, serine 52, and aspartate 82–glutamine 85 contribute to the NADP(+) site. Histidine 107 is an active-site residue. Residue glycine 133 coordinates NADP(+). The 146-residue stretch at serine 182–phenylalanine 327 folds into the KARI C-terminal knotted domain. Mg(2+)-binding residues include aspartate 190, glutamate 194, glutamate 226, and glutamate 230. Residue serine 251 coordinates substrate.

This sequence belongs to the ketol-acid reductoisomerase family. Mg(2+) serves as cofactor.

The catalysed reaction is (2R)-2,3-dihydroxy-3-methylbutanoate + NADP(+) = (2S)-2-acetolactate + NADPH + H(+). It carries out the reaction (2R,3R)-2,3-dihydroxy-3-methylpentanoate + NADP(+) = (S)-2-ethyl-2-hydroxy-3-oxobutanoate + NADPH + H(+). It participates in amino-acid biosynthesis; L-isoleucine biosynthesis; L-isoleucine from 2-oxobutanoate: step 2/4. Its pathway is amino-acid biosynthesis; L-valine biosynthesis; L-valine from pyruvate: step 2/4. Involved in the biosynthesis of branched-chain amino acids (BCAA). Catalyzes an alkyl-migration followed by a ketol-acid reduction of (S)-2-acetolactate (S2AL) to yield (R)-2,3-dihydroxy-isovalerate. In the isomerase reaction, S2AL is rearranged via a Mg-dependent methyl migration to produce 3-hydroxy-3-methyl-2-ketobutyrate (HMKB). In the reductase reaction, this 2-ketoacid undergoes a metal-dependent reduction by NADPH to yield (R)-2,3-dihydroxy-isovalerate. This chain is Ketol-acid reductoisomerase (NADP(+)), found in Methanospirillum hungatei JF-1 (strain ATCC 27890 / DSM 864 / NBRC 100397 / JF-1).